Reading from the N-terminus, the 824-residue chain is Glycerol-3-phosphate acyltransferase (824 aa).

An HXXXXD motif motif is present at residues 302 to 307; that stretch reads CHRSHM.

The protein belongs to the GPAT/DAPAT family.

It is found in the cell inner membrane. The catalysed reaction is sn-glycerol 3-phosphate + an acyl-CoA = a 1-acyl-sn-glycero-3-phosphate + CoA. It functions in the pathway phospholipid metabolism; CDP-diacylglycerol biosynthesis; CDP-diacylglycerol from sn-glycerol 3-phosphate: step 1/3. This is Glycerol-3-phosphate acyltransferase from Actinobacillus pleuropneumoniae serotype 5b (strain L20).